Here is a 389-residue protein sequence, read N- to C-terminus: Lipid-A-disaccharide synthase (389 aa).

The protein belongs to the LpxB family.

It catalyses the reaction a lipid X + a UDP-2-N,3-O-bis[(3R)-3-hydroxyacyl]-alpha-D-glucosamine = a lipid A disaccharide + UDP + H(+). It functions in the pathway bacterial outer membrane biogenesis; LPS lipid A biosynthesis. In terms of biological role, condensation of UDP-2,3-diacylglucosamine and 2,3-diacylglucosamine-1-phosphate to form lipid A disaccharide, a precursor of lipid A, a phosphorylated glycolipid that anchors the lipopolysaccharide to the outer membrane of the cell. This is Lipid-A-disaccharide synthase from Burkholderia cenocepacia (strain ATCC BAA-245 / DSM 16553 / LMG 16656 / NCTC 13227 / J2315 / CF5610) (Burkholderia cepacia (strain J2315)).